The following is a 200-amino-acid chain: Dephospho-CoA kinase (200 aa).

Residues 4–200 (VIGLTGGIAS…AILKKWNIID (197 aa)) enclose the DPCK domain. 12–17 (ASGKST) lines the ATP pocket.

This sequence belongs to the CoaE family.

Its subcellular location is the cytoplasm. The catalysed reaction is 3'-dephospho-CoA + ATP = ADP + CoA + H(+). It participates in cofactor biosynthesis; coenzyme A biosynthesis; CoA from (R)-pantothenate: step 5/5. Functionally, catalyzes the phosphorylation of the 3'-hydroxyl group of dephosphocoenzyme A to form coenzyme A. This chain is Dephospho-CoA kinase, found in Bacillus thuringiensis subsp. konkukian (strain 97-27).